A 319-amino-acid polypeptide reads, in one-letter code: Ribosomal protein uL3 glutamine methyltransferase (319 aa).

The protein belongs to the protein N5-glutamine methyltransferase family. PrmB subfamily.

The catalysed reaction is L-glutaminyl-[ribosomal protein uL3] + S-adenosyl-L-methionine = N(5)-methyl-L-glutaminyl-[ribosomal protein uL3] + S-adenosyl-L-homocysteine + H(+). In terms of biological role, methylates large ribosomal subunit protein uL3 on a specific glutamine residue. The protein is Ribosomal protein uL3 glutamine methyltransferase of Bradyrhizobium diazoefficiens (strain JCM 10833 / BCRC 13528 / IAM 13628 / NBRC 14792 / USDA 110).